We begin with the raw amino-acid sequence, 452 residues long: Neuromedin-K receptor (452 aa).

Residues 1-71 (MASVPRGENW…TNQFVQPSWR (71 aa)) lie on the Extracellular side of the membrane. N-linked (GlcNAc...) asparagine glycans are attached at residues asparagine 9, asparagine 23, asparagine 40, and asparagine 60. A helical membrane pass occupies residues 72–94 (IALWSLAYGLVVAVAVFGNLIVI). Residues 95–104 (WIILAHKRMR) are Cytoplasmic-facing. A helical membrane pass occupies residues 105 to 126 (TVTNYFLVNLAFSDASVAAFNT). Residues 127-146 (LINFIYGLHSEWYFGANYCR) are Extracellular-facing. Cysteine 145 and cysteine 220 are disulfide-bonded. The helical transmembrane segment at 147 to 168 (FQNFFPITAVFASIYSMTAIAV) threads the bilayer. Over 169 to 188 (DRYMAIIDPLKPRLSATATK) the chain is Cytoplasmic. Residues 189 to 209 (IVIGSIWILAFLLAFPQCLYS) form a helical membrane-spanning segment. The Extracellular portion of the chain corresponds to 210–232 (KIKVMPGRTLCYVQWPEGPKQHF). The chain crosses the membrane as a helical span at residues 233–257 (TYHIIVIILVYCFPLLIMGVTYTIV). At 258-286 (GITLWGGEIPGDTCDKYHEQLKAKRKVVK) the chain is on the cytoplasmic side. Residues 287–308 (MMIIVVVTFAICWLPYHVYFIL) form a helical membrane-spanning segment. Residues 309–321 (TAIYQQLNRWKYI) are Extracellular-facing. The helical transmembrane segment at 322-346 (QQVYLASFWLAMSSTMYNPIIYCCL) threads the bilayer. The Cytoplasmic portion of the chain corresponds to 347–452 (NKRFRAGFKR…SPYTSVDEYS (106 aa)). Cysteine 361 carries the S-palmitoyl cysteine lipid modification. The segment at 400–452 (FDPNDGDPTKSSRKKRAVPRDPSANGCSHRGSKSASTTSSFISSPYTSVDEYS) is disordered. Residues 432 to 452 (KSASTTSSFISSPYTSVDEYS) are compositionally biased toward low complexity.

Belongs to the G-protein coupled receptor 1 family. Post-translationally, the anchoring of this receptor to the plasma membrane is probably mediated by the palmitoylation of a cysteine residue.

The protein resides in the cell membrane. Functionally, this is a receptor for the tachykinin neuropeptide neuromedin-K (neurokinin B). It is associated with G proteins that activate a phosphatidylinositol-calcium second messenger system. The rank order of affinity of this receptor to tachykinins is: neuromedin-K &gt; substance K &gt; substance P. The protein is Neuromedin-K receptor (Tacr3) of Rattus norvegicus (Rat).